A 216-amino-acid chain; its full sequence is Soluble inorganic pyrophosphatase 3 (216 aa).

The span at 1 to 10 shows a compositional bias: acidic residues; that stretch reads MSEEAYEETQ. The tract at residues 1–21 is disordered; the sequence is MSEEAYEETQESSQSPRPVPK. The substrate site is built by lysine 66 and arginine 80. Residue tyrosine 88 is the Proton donor of the active site. Residue tyrosine 92 coordinates substrate. Aspartate 102, aspartate 107, and aspartate 139 together coordinate Mg(2+). Residue tyrosine 176 coordinates substrate.

It belongs to the PPase family. Mg(2+) serves as cofactor. Expressed preferentially in stamen, pollen and flower, and at a low level in lateral roots and root elongation zones.

The protein localises to the cytoplasm. It carries out the reaction diphosphate + H2O = 2 phosphate + H(+). This chain is Soluble inorganic pyrophosphatase 3, found in Arabidopsis thaliana (Mouse-ear cress).